The primary structure comprises 125 residues: Calcitonin receptor-stimulating peptide 2 (125 aa).

A signal peptide spans M1–A25. Residues A26–Q77 constitute a propeptide that is removed on maturation. C81 and C86 form a disulfide bridge.

The protein belongs to the calcitonin family.

The protein resides in the secreted. The chain is Calcitonin receptor-stimulating peptide 2 (CRSP2) from Capra hircus (Goat).